A 426-amino-acid chain; its full sequence is Serine--tRNA ligase (426 aa).

231 to 233 (TSE) provides a ligand contact to L-serine. 262-264 (RSE) is a binding site for ATP. Glu285 provides a ligand contact to L-serine. 349 to 352 (EISS) contributes to the ATP binding site. Ser385 lines the L-serine pocket.

It belongs to the class-II aminoacyl-tRNA synthetase family. Type-1 seryl-tRNA synthetase subfamily. As to quaternary structure, homodimer. The tRNA molecule binds across the dimer.

Its subcellular location is the cytoplasm. The enzyme catalyses tRNA(Ser) + L-serine + ATP = L-seryl-tRNA(Ser) + AMP + diphosphate + H(+). It catalyses the reaction tRNA(Sec) + L-serine + ATP = L-seryl-tRNA(Sec) + AMP + diphosphate + H(+). The protein operates within aminoacyl-tRNA biosynthesis; selenocysteinyl-tRNA(Sec) biosynthesis; L-seryl-tRNA(Sec) from L-serine and tRNA(Sec): step 1/1. In terms of biological role, catalyzes the attachment of serine to tRNA(Ser). Is also able to aminoacylate tRNA(Sec) with serine, to form the misacylated tRNA L-seryl-tRNA(Sec), which will be further converted into selenocysteinyl-tRNA(Sec). The sequence is that of Serine--tRNA ligase from Legionella pneumophila (strain Paris).